The primary structure comprises 76 residues: Secreted RxLR effector protein 31 (76 aa).

The N-terminal stretch at 1–24 (MRHCACLFHLFLIGFLCNVYFSAC) is a signal peptide. A RxLR-dEER motif is present at residues 49 to 64 (RILRANDSEFLLTEER). N-linked (GlcNAc...) asparagine glycosylation occurs at Asn-54.

Belongs to the RxLR effector family.

It is found in the secreted. The protein localises to the host nucleus. Its subcellular location is the host cytoplasm. Functionally, secreted effector that dos not suppress the host cell death induced by cell death-inducing proteins. The sequence is that of Secreted RxLR effector protein 31 from Plasmopara viticola (Downy mildew of grapevine).